The sequence spans 287 residues: Orotidine 5'-phosphate decarboxylase (287 aa).

The active-site Proton donor is the lysine 97.

This sequence belongs to the OMP decarboxylase family. Type 2 subfamily.

The enzyme catalyses orotidine 5'-phosphate + H(+) = UMP + CO2. The protein operates within pyrimidine metabolism; UMP biosynthesis via de novo pathway; UMP from orotate: step 2/2. The protein is Orotidine 5'-phosphate decarboxylase of Clostridium perfringens (strain ATCC 13124 / DSM 756 / JCM 1290 / NCIMB 6125 / NCTC 8237 / Type A).